We begin with the raw amino-acid sequence, 251 residues long: Gamma-interferon-inducible lysosomal thiol reductase (251 aa).

The signal sequence occupies residues 1–21 (MFGFRLSVLLFAVCSLSACSC). Residues 22-60 (MFVNSCKYPPSQWCDSRDIAAQCGVLEQCMKFNASPVTV) enclose the Saposin A-type domain. C68 and C71 form a disulfide bridge. An N-linked (GlcNAc...) asparagine glycan is attached at N108.

The protein belongs to the GILT family. As to quaternary structure, dimer; disulfide-linked. In terms of tissue distribution, highly expressed in spleen and kidney. Also detected at lower levels in liver, heart, brain, intestine and gill.

The protein resides in the secreted. It localises to the lysosome. In terms of biological role, lysosomal thiol reductase that can reduce protein disulfide bonds. May facilitate the complete unfolding of proteins destined for lysosomal degradation. Plays an important role in antigen processing. The chain is Gamma-interferon-inducible lysosomal thiol reductase from Carassius auratus (Goldfish).